The chain runs to 1116 residues: Pleckstrin homology domain-containing family A member 5 (1116 aa).

The residue at position 2 (Ala2) is an N-acetylalanine. A WW 1 domain is found at 10–43 (ISLPRSWTYGITRGGRVFFINEEAKSTTWLHPVT). Ser55 is subject to Phosphoserine. The WW 2 domain maps to 56–89 (TDLPTGWEEAYTFEGARYYINHNERKVTCKHPVT). Residues 140–163 (SPVGRTSRASKKVHNFGKRSNSIK) are disordered. Residues 147–156 (RASKKVHNFG) are compositionally biased toward basic residues. The PH domain maps to 169–268 (PVVRRGWLYK…WMKAMLDAAL (100 aa)). Lys301 is covalently cross-linked (Glycyl lysine isopeptide (Lys-Gly) (interchain with G-Cter in SUMO2)). Phosphoserine occurs at positions 382 and 410. 2 positions are modified to phosphothreonine: Thr438 and Thr460. A disordered region spans residues 459 to 495 (RTLPRNSKTRPESICSVTPSTHDKTLGPGAEEKRRSM). Residues 479–495 (THDKTLGPGAEEKRRSM) are compositionally biased toward basic and acidic residues. 6 positions are modified to phosphoserine: Ser568, Ser607, Ser809, Ser855, Ser933, and Ser937. Disordered regions lie at residues 928-978 (GASD…PATE) and 1025-1116 (RNKD…FMCV). The segment covering 930–949 (SDQSPLQSPSNLRDNPFRTT) has biased composition (polar residues). Residues 952 to 978 (RRRDDKELDTAIRENDVKPDHETPATE) are compositionally biased toward basic and acidic residues. A compositionally biased stretch (polar residues) spans 1036-1046 (FSPQDETQTAN). The segment covering 1047–1061 (HKPEEHPEENTKNSV) has biased composition (basic and acidic residues). The span at 1070–1085 (SYESTPEVSRGNQTMA) shows a compositional bias: polar residues. Residues 1088 to 1101 (SLSPSPESSASPVP) show a composition bias toward low complexity.

In terms of tissue distribution, highly expressed in heart and kidney.

It is found in the cytoplasm. The chain is Pleckstrin homology domain-containing family A member 5 (PLEKHA5) from Homo sapiens (Human).